Reading from the N-terminus, the 261-residue chain is MKHIARKRFGQHFLTDGAMIEAIVDAIGPRPGQAMVEIGPGLAALTQPLVERLGQLTVIELDRDLAARLRAHPQLVVIESDVLKVDFAQVAQALTTTKLRVVGNLPYNISTPILFHLLNFIDVIEDQHFMLQKEVIDRMVAGPCTAAYGRLSVMLQWRYAMENVLLVPPESFEPPPRVNSAVVRMVPHVNPAAVDGHLLSELVQVAFSQRRKLLRHTLGQWLQQKGYADEFDVQRRAEEVPVAEYLALALKLATHSQAASH.

S-adenosyl-L-methionine is bound by residues H12, L14, G39, E60, D81, and N104.

Belongs to the class I-like SAM-binding methyltransferase superfamily. rRNA adenine N(6)-methyltransferase family. RsmA subfamily.

The protein localises to the cytoplasm. The enzyme catalyses adenosine(1518)/adenosine(1519) in 16S rRNA + 4 S-adenosyl-L-methionine = N(6)-dimethyladenosine(1518)/N(6)-dimethyladenosine(1519) in 16S rRNA + 4 S-adenosyl-L-homocysteine + 4 H(+). Specifically dimethylates two adjacent adenosines (A1518 and A1519) in the loop of a conserved hairpin near the 3'-end of 16S rRNA in the 30S particle. May play a critical role in biogenesis of 30S subunits. This chain is Ribosomal RNA small subunit methyltransferase A, found in Albidiferax ferrireducens (strain ATCC BAA-621 / DSM 15236 / T118) (Rhodoferax ferrireducens).